The following is a 131-amino-acid chain: Large ribosomal subunit protein uL22c (131 aa).

It belongs to the universal ribosomal protein uL22 family. As to quaternary structure, part of the 50S ribosomal subunit.

The protein localises to the plastid. This protein binds specifically to 23S rRNA. Its function is as follows. The globular domain of the protein is located near the polypeptide exit tunnel on the outside of the subunit, while an extended beta-hairpin is found that lines the wall of the exit tunnel in the center of the 70S ribosome. This is Large ribosomal subunit protein uL22c (rpl22) from Aneura mirabilis (Parasitic liverwort).